The primary structure comprises 474 residues: Dihydrolipoyl dehydrogenase (474 aa).

FAD-binding positions include 34 to 51 (EGNPYDDPKGEARLGGTC), lysine 60, and glycine 124. Cysteine 51 and cysteine 56 are disulfide-bonded. Residues 189–193 (GAGVI), glutamate 212, valine 246, and 278–281 (SVGR) contribute to the NAD(+) site. Residues aspartate 321 and alanine 329 each contribute to the FAD site. Histidine 453 acts as the Proton acceptor in catalysis.

The protein belongs to the class-I pyridine nucleotide-disulfide oxidoreductase family. FAD is required as a cofactor.

It is found in the cytoplasm. It carries out the reaction N(6)-[(R)-dihydrolipoyl]-L-lysyl-[protein] + NAD(+) = N(6)-[(R)-lipoyl]-L-lysyl-[protein] + NADH + H(+). The branched-chain alpha-keto dehydrogenase complex catalyzes the overall conversion of alpha-keto acids to acyl-CoA and CO(2). It contains multiple copies of 3 enzymatic components: branched-chain alpha-keto acid decarboxylase (E1), lipoamide acyltransferase (E2) and lipoamide dehydrogenase (E3). This chain is Dihydrolipoyl dehydrogenase (odhL), found in Cupriavidus necator (strain ATCC 17699 / DSM 428 / KCTC 22496 / NCIMB 10442 / H16 / Stanier 337) (Ralstonia eutropha).